The sequence spans 545 residues: Reticulon-2 (545 aa).

Disordered stretches follow at residues 1–183 (MGQV…ETGE) and 199–250 (SPEV…EREP). Residues 14–25 (APSTASSTPDST) show a composition bias toward low complexity. The span at 32-43 (SDFRELHTAREF) shows a compositional bias: basic and acidic residues. At Ser-44 the chain carries Phosphoserine. Residues 135–146 (RPLEDLRLRLDH) are compositionally biased toward basic and acidic residues. Low complexity predominate over residues 157-166 (GEDSSTSSST). A compositionally biased stretch (polar residues) spans 199–230 (SPEVLTPQLSPGSGTPQAGTPSPSRSRDSNSG). Residues Ser-227 and Ser-229 each carry the phosphoserine modification. Residues 345 to 545 (VADLLYWKDT…AVSGSKAKAE (201 aa)) form the Reticulon domain. 2 helical membrane-spanning segments follow: residues 368-388 (LLCLLHFSIVSVAAHLALLLL) and 463-483 (LLFYILTFVGAIFNGLTLLIL).

In terms of assembly, interacts with isoform 1 but not isoform 3 of SPAST. Interacts with BACE1. Interacts (via first transmembrane domain) with ARL6IP5/GTRAP3-18. Interacts (via N-terminus) with SLC1A1/EAAC1; the interaction promotes cell surface expression of SLC1A1. Interacts with TMEM33. As to expression, highly expressed in skeletal muscle.

The protein resides in the endoplasmic reticulum membrane. It is found in the sarcoplasmic reticulum membrane. It localises to the cell membrane. The protein localises to the sarcolemma. Its subcellular location is the T-tubule. The protein resides in the cytoplasm. It is found in the myofibril. It localises to the sarcomere. The protein localises to the z line. Its subcellular location is the cytoskeleton. Its function is as follows. Inhibits amyloid precursor protein processing, probably by blocking BACE1 activity. Enhances trafficking of the glutamate transporter SLC1A1/EAAC1 from the endoplasmic reticulum to the cell surface. Plays a role in the translocation of SLC2A4/GLUT4 from intracellular membranes to the cell membrane which facilitates the uptake of glucose into the cell. The polypeptide is Reticulon-2 (RTN2) (Homo sapiens (Human)).